Reading from the N-terminus, the 311-residue chain is Thymidylate synthase (311 aa).

Residues Arg-28 and Arg-172–Arg-173 contribute to the dUMP site. Cys-192 (nucleophile) is an active-site residue. Residues Arg-213–Asp-216, Asn-224, and His-254–Tyr-256 each bind dUMP. Asp-216 contacts (6R)-5,10-methylene-5,6,7,8-tetrahydrofolate. Ala-310 serves as a coordination point for (6R)-5,10-methylene-5,6,7,8-tetrahydrofolate.

Belongs to the thymidylate synthase family. Bacterial-type ThyA subfamily. As to quaternary structure, homodimer.

Its subcellular location is the cytoplasm. The enzyme catalyses dUMP + (6R)-5,10-methylene-5,6,7,8-tetrahydrofolate = 7,8-dihydrofolate + dTMP. Its pathway is pyrimidine metabolism; dTTP biosynthesis. In terms of biological role, catalyzes the reductive methylation of 2'-deoxyuridine-5'-monophosphate (dUMP) to 2'-deoxythymidine-5'-monophosphate (dTMP) while utilizing 5,10-methylenetetrahydrofolate (mTHF) as the methyl donor and reductant in the reaction, yielding dihydrofolate (DHF) as a by-product. This enzymatic reaction provides an intracellular de novo source of dTMP, an essential precursor for DNA biosynthesis. The sequence is that of Thymidylate synthase from Sphingopyxis alaskensis (strain DSM 13593 / LMG 18877 / RB2256) (Sphingomonas alaskensis).